We begin with the raw amino-acid sequence, 145 residues long: Large ribosomal subunit protein uL16 (145 aa).

It belongs to the universal ribosomal protein uL16 family. As to quaternary structure, part of the 50S ribosomal subunit.

Its function is as follows. Binds 23S rRNA and is also seen to make contacts with the A and possibly P site tRNAs. The polypeptide is Large ribosomal subunit protein uL16 (Exiguobacterium sibiricum (strain DSM 17290 / CCUG 55495 / CIP 109462 / JCM 13490 / 255-15)).